Consider the following 213-residue polypeptide: Orotate phosphoribosyltransferase (213 aa).

5-phospho-alpha-D-ribose 1-diphosphate is bound at residue K26. 34-35 (FF) is a binding site for orotate. 5-phospho-alpha-D-ribose 1-diphosphate contacts are provided by residues 72-73 (YK), R99, K100, K103, H105, and 124-132 (DDVITAGTA). Orotate is bound by residues T128 and R156.

It belongs to the purine/pyrimidine phosphoribosyltransferase family. PyrE subfamily. As to quaternary structure, homodimer. The cofactor is Mg(2+).

The enzyme catalyses orotidine 5'-phosphate + diphosphate = orotate + 5-phospho-alpha-D-ribose 1-diphosphate. It functions in the pathway pyrimidine metabolism; UMP biosynthesis via de novo pathway; UMP from orotate: step 1/2. Functionally, catalyzes the transfer of a ribosyl phosphate group from 5-phosphoribose 1-diphosphate to orotate, leading to the formation of orotidine monophosphate (OMP). The polypeptide is Orotate phosphoribosyltransferase (Serratia proteamaculans (strain 568)).